We begin with the raw amino-acid sequence, 41 residues long: Photosystem I reaction center subunit IX (41 aa).

Residues 7–27 traverse the membrane as a helical segment; it reads YLSTAPVLLTLWMTFTAGFII.

It belongs to the PsaJ family.

The protein localises to the plastid. Its subcellular location is the chloroplast thylakoid membrane. In terms of biological role, may help in the organization of the PsaE and PsaF subunits. The protein is Photosystem I reaction center subunit IX of Thalassiosira pseudonana (Marine diatom).